The primary structure comprises 121 residues: Large ribosomal subunit protein uL22 (121 aa).

This sequence belongs to the universal ribosomal protein uL22 family. In terms of assembly, part of the 50S ribosomal subunit.

Its function is as follows. This protein binds specifically to 23S rRNA; its binding is stimulated by other ribosomal proteins, e.g. L4, L17, and L20. It is important during the early stages of 50S assembly. It makes multiple contacts with different domains of the 23S rRNA in the assembled 50S subunit and ribosome. Functionally, the globular domain of the protein is located near the polypeptide exit tunnel on the outside of the subunit, while an extended beta-hairpin is found that lines the wall of the exit tunnel in the center of the 70S ribosome. This is Large ribosomal subunit protein uL22 from Synechocystis sp. (strain ATCC 27184 / PCC 6803 / Kazusa).